A 593-amino-acid polypeptide reads, in one-letter code: UvrABC system protein C (593 aa).

Residues 14-91 enclose the GIY-YIG domain; sequence DSPGCYLHKD…IQENMPKYNI (78 aa). Residues 196–231 form the UVR domain; sequence NKIVNGLTEKMKSAAMTMEFERAAEYRDLIEAISLL.

The protein belongs to the UvrC family. As to quaternary structure, interacts with UvrB in an incision complex.

Its subcellular location is the cytoplasm. The UvrABC repair system catalyzes the recognition and processing of DNA lesions. UvrC both incises the 5' and 3' sides of the lesion. The N-terminal half is responsible for the 3' incision and the C-terminal half is responsible for the 5' incision. The protein is UvrABC system protein C of Streptococcus agalactiae serotype V (strain ATCC BAA-611 / 2603 V/R).